Consider the following 631-residue polypeptide: tRNA uridine 5-carboxymethylaminomethyl modification enzyme MnmG (631 aa).

Residues 13 to 18 (GGGHAG), valine 125, and serine 180 each bind FAD. Position 273–287 (273–287 (GPRYCPSIEDKVMRF)) interacts with NAD(+). Position 370 (glutamine 370) interacts with FAD.

It belongs to the MnmG family. In terms of assembly, homodimer. Heterotetramer of two MnmE and two MnmG subunits. Requires FAD as cofactor.

It localises to the cytoplasm. Functionally, NAD-binding protein involved in the addition of a carboxymethylaminomethyl (cmnm) group at the wobble position (U34) of certain tRNAs, forming tRNA-cmnm(5)s(2)U34. This is tRNA uridine 5-carboxymethylaminomethyl modification enzyme MnmG from Vibrio campbellii (strain ATCC BAA-1116).